A 274-amino-acid chain; its full sequence is NH(3)-dependent NAD(+) synthetase (274 aa).

46–53 (GISGGQDS) is an ATP binding site. Aspartate 52 is a binding site for Mg(2+). A deamido-NAD(+)-binding site is contributed by arginine 140. ATP is bound at residue threonine 160. Glutamate 165 contributes to the Mg(2+) binding site. Deamido-NAD(+) is bound by residues lysine 173 and aspartate 180. Positions 189 and 211 each coordinate ATP. 260 to 261 (HK) lines the deamido-NAD(+) pocket.

The protein belongs to the NAD synthetase family. As to quaternary structure, homodimer.

The catalysed reaction is deamido-NAD(+) + NH4(+) + ATP = AMP + diphosphate + NAD(+) + H(+). It functions in the pathway cofactor biosynthesis; NAD(+) biosynthesis; NAD(+) from deamido-NAD(+) (ammonia route): step 1/1. Functionally, catalyzes the ATP-dependent amidation of deamido-NAD to form NAD. Uses ammonia as a nitrogen source. The polypeptide is NH(3)-dependent NAD(+) synthetase (Streptococcus pneumoniae (strain Hungary19A-6)).